Reading from the N-terminus, the 235-residue chain is Geranylgeranylglyceryl phosphate synthase (235 aa).

Position 13 (lysine 13) interacts with sn-glycerol 1-phosphate. The Mg(2+) site is built by aspartate 15 and threonine 42. Sn-glycerol 1-phosphate is bound by residues tyrosine 162–glycine 167, glycine 192, and glycine 212–aspartate 213.

This sequence belongs to the GGGP/HepGP synthase family. Group I subfamily. It depends on Mg(2+) as a cofactor.

Its subcellular location is the cytoplasm. It catalyses the reaction sn-glycerol 1-phosphate + (2E,6E,10E)-geranylgeranyl diphosphate = sn-3-O-(geranylgeranyl)glycerol 1-phosphate + diphosphate. It functions in the pathway membrane lipid metabolism; glycerophospholipid metabolism. Its function is as follows. Prenyltransferase that catalyzes the transfer of the geranylgeranyl moiety of geranylgeranyl diphosphate (GGPP) to the C3 hydroxyl of sn-glycerol-1-phosphate (G1P). This reaction is the first ether-bond-formation step in the biosynthesis of archaeal membrane lipids. This chain is Geranylgeranylglyceryl phosphate synthase, found in Natronomonas pharaonis (strain ATCC 35678 / DSM 2160 / CIP 103997 / JCM 8858 / NBRC 14720 / NCIMB 2260 / Gabara) (Halobacterium pharaonis).